We begin with the raw amino-acid sequence, 242 residues long: Type III pantothenate kinase (242 aa).

Asp-7 to Lys-14 serves as a coordination point for ATP. Substrate contacts are provided by residues Tyr-91 and Gly-98–Arg-101. Catalysis depends on Asp-100, which acts as the Proton acceptor. An ATP-binding site is contributed by Thr-121. Thr-171 serves as a coordination point for substrate.

This sequence belongs to the type III pantothenate kinase family. As to quaternary structure, homodimer. Requires NH4(+) as cofactor. The cofactor is K(+).

It is found in the cytoplasm. The catalysed reaction is (R)-pantothenate + ATP = (R)-4'-phosphopantothenate + ADP + H(+). Its pathway is cofactor biosynthesis; coenzyme A biosynthesis; CoA from (R)-pantothenate: step 1/5. Functionally, catalyzes the phosphorylation of pantothenate (Pan), the first step in CoA biosynthesis. The protein is Type III pantothenate kinase of Xanthomonas axonopodis pv. citri (strain 306).